The chain runs to 200 residues: Elongation factor Ts (200 aa).

The interval 81–84 is involved in Mg(2+) ion dislocation from EF-Tu; sequence TDFV.

Belongs to the EF-Ts family.

Its subcellular location is the cytoplasm. Functionally, associates with the EF-Tu.GDP complex and induces the exchange of GDP to GTP. It remains bound to the aminoacyl-tRNA.EF-Tu.GTP complex up to the GTP hydrolysis stage on the ribosome. The chain is Elongation factor Ts from Nitratidesulfovibrio vulgaris (strain DSM 19637 / Miyazaki F) (Desulfovibrio vulgaris).